The sequence spans 559 residues: Leucine-rich repeat protein soc-2 (559 aa).

The segment covering 1–17 (METSKEFEFRPAKETSR) has biased composition (basic and acidic residues). Residues 1 to 55 (METSKEFEFRPAKETSRSKSPGGIVGRLSNFARNKARHSLSEKGSNSVGGSGGAG) form a disordered region. 20 LRR repeats span residues 74 to 95 (QDQR…IKEL), 97 to 118 (QLTE…IGQL), 120 to 142 (NLKK…ASLE), 143 to 164 (SLET…IYKI), 166 to 187 (SLET…IGNL), 189 to 210 (KLKM…IGKL), 212 to 233 (SLVV…IGDC), 235 to 256 (SLTQ…IGKL), 258 to 279 (NLVR…LESC), 281 to 302 (QLEE…LLTM), 305 to 326 (KIHT…GPQQ), 329 to 350 (STVT…IFSK), 353 to 374 (RLTK…MGSW), 376 to 397 (SITE…IEKL), 399 to 420 (NLEI…IGNL), 422 to 443 (KLRE…IGFL), 445 to 466 (HLTK…IGNL), 468 to 489 (SLQD…IGHL), 491 to 513 (SLKS…LALC), and 515 to 536 (SLEI…ITAG).

Belongs to the SHOC2 family. Interacts with let-60.

Acts as a Ras effector and participates in MAPK pathway activation. Probably acts as a scaffolding protein in a protein phosphatase complex that specifically dephosphorylates Raf kinase and stimulates Raf activity at specialized signaling complexes upon Ras activation. Required for vulval development. Involved in fluid homeostasis. Plays a role in nicotinic acetylcholine receptor (nAChR)-mediated sensitivity to nicotine. The sequence is that of Leucine-rich repeat protein soc-2 (soc-2) from Caenorhabditis elegans.